A 595-amino-acid chain; its full sequence is Sucrose transport protein SUT4 (595 aa).

Over 1–61 (MDSAAGGGGL…PAARTTTTRK (61 aa)) the chain is Cytoplasmic. The segment at 29-55 (SLNGGTPRGGSPKDPDATHQQGPPAAR) is disordered. A helical membrane pass occupies residues 62 to 82 (LVLACMVAAGVQFGWALQLSL). The Extracellular segment spans residues 83–97 (LTPYIQTLGIDHAMA). Residues 98 to 118 (SFIWLCGPITGFVVQPCVGVW) form a helical membrane-spanning segment. The Cytoplasmic portion of the chain corresponds to 119–130 (SDKCRSKYGRRR). Residues 131 to 151 (PFILAGCLMICFAVTLIGFSA) form a helical membrane-spanning segment. The Extracellular segment spans residues 152–173 (DLGYILGDTTEHCSTYKGSRFR). The helical transmembrane segment at 174–194 (AAIIFVLGFWMLDLANNTVQG) threads the bilayer. Over 195–213 (PARALLADLSGPDQCNSAN) the chain is Cytoplasmic. The helical transmembrane segment at 214-234 (AIFCTWMAVGNVLGFSSGASG) threads the bilayer. Over 235–256 (NWHKWFPFLMTRACCEACSNLK) the chain is Extracellular. A helical transmembrane segment spans residues 257–277 (AAFLVAVVFLLFCMSVTLYFA). Over 278–365 (EEIPLEPTDA…LTSMRHLPPG (88 aa)) the chain is Cytoplasmic. The disordered stretch occupies residues 291–340 (SDSAPLLNGSRDDNNASNEPRNGALPNGHTDGSNVPANSNAEDSNSNREN). A compositionally biased stretch (polar residues) spans 320–334 (TDGSNVPANSNAEDS). A helical membrane pass occupies residues 366-386 (MYSVLLVMALTWLSWFPFFLF). The Extracellular portion of the chain corresponds to 387 to 417 (DTDWMGREVYHGDPNGNLSERKAYDNGVREG). An N-linked (GlcNAc...) asparagine glycan is attached at asparagine 403. Residues 418 to 438 (AFGLLLNSVVLGIGSFLVDPL) traverse the membrane as a helical segment. Topologically, residues 439–447 (CRLMGARLV) are cytoplasmic. A helical transmembrane segment spans residues 448–468 (WAISNFTVFICMLATAILSWI). Residues 469–491 (SFDLYSSKLHHIIGANKTVKNSA) lie on the Extracellular side of the membrane. Asparagine 484 carries an N-linked (GlcNAc...) asparagine glycan. A helical transmembrane segment spans residues 492 to 512 (LIVFSLLGLPLSITYSVPFSV). Residues 513–525 (TAELTAGTGGGQG) are Cytoplasmic-facing. The helical transmembrane segment at 526–546 (LATGVLNLAIVVPQIVVSLGA) threads the bilayer. The Extracellular portion of the chain corresponds to 547 to 556 (GPWDALFGGG). Residues 557-577 (NVPAFALASVFSLGAGVLAVL) traverse the membrane as a helical segment. The Cytoplasmic segment spans residues 578-595 (KLPKLPNSYRSAGFHGFG).

This sequence belongs to the glycoside-pentoside-hexuronide (GPH) cation symporter transporter (TC 2.A.2.4) family. As to quaternary structure, homodimer.

The protein localises to the cell membrane. It participates in glycan biosynthesis; sucrose metabolism. In terms of biological role, responsible for the transport of sucrose into the cell, with the concomitant uptake of protons (symport system). May also transport other glucosides. The protein is Sucrose transport protein SUT4 (SUT4) of Oryza sativa subsp. indica (Rice).